The sequence spans 496 residues: Glutamate--tRNA ligase (496 aa).

Residues 12-22 (PSPTGTPHVGL) carry the 'HIGH' region motif. The 'KMSKS' region motif lies at 256 to 260 (KLSKR). Residue Lys259 coordinates ATP.

The protein belongs to the class-I aminoacyl-tRNA synthetase family. Glutamate--tRNA ligase type 1 subfamily. In terms of assembly, monomer.

The protein localises to the cytoplasm. It carries out the reaction tRNA(Glu) + L-glutamate + ATP = L-glutamyl-tRNA(Glu) + AMP + diphosphate. Its function is as follows. Catalyzes the attachment of glutamate to tRNA(Glu) in a two-step reaction: glutamate is first activated by ATP to form Glu-AMP and then transferred to the acceptor end of tRNA(Glu). In Mycobacteroides abscessus (strain ATCC 19977 / DSM 44196 / CCUG 20993 / CIP 104536 / JCM 13569 / NCTC 13031 / TMC 1543 / L948) (Mycobacterium abscessus), this protein is Glutamate--tRNA ligase.